The following is a 518-amino-acid chain: Probable cytosol aminopeptidase (518 aa).

Lysine 270 and aspartate 275 together coordinate Mn(2+). Lysine 282 is a catalytic residue. The Mn(2+) site is built by aspartate 293, aspartate 352, and glutamate 354. The active site involves arginine 356. Residues 495 to 507 (SRTTRQPGSTGET) are compositionally biased toward polar residues. Positions 495–518 (SRTTRQPGSTGETGSRKNRRKSKE) are disordered.

It belongs to the peptidase M17 family. Requires Mn(2+) as cofactor.

The protein localises to the cytoplasm. The enzyme catalyses Release of an N-terminal amino acid, Xaa-|-Yaa-, in which Xaa is preferably Leu, but may be other amino acids including Pro although not Arg or Lys, and Yaa may be Pro. Amino acid amides and methyl esters are also readily hydrolyzed, but rates on arylamides are exceedingly low.. It carries out the reaction Release of an N-terminal amino acid, preferentially leucine, but not glutamic or aspartic acids.. Its function is as follows. Presumably involved in the processing and regular turnover of intracellular proteins. Catalyzes the removal of unsubstituted N-terminal amino acids from various peptides. The polypeptide is Probable cytosol aminopeptidase (Nitrosospira multiformis (strain ATCC 25196 / NCIMB 11849 / C 71)).